The chain runs to 135 residues: uncharacterized protein (135 aa).

A coiled-coil region spans residues 68-135 (DEVDNYIRVF…KKESEDEDEL (68 aa)). The disordered stretch occupies residues 88 to 135 (EKIVGKPPKSTSAPDIDELEEEPDEETEEKSEEKTEKKKKESEDEDEL). Residues 102-117 (DIDELEEEPDEETEEK) are compositionally biased toward acidic residues. Residues 118 to 129 (SEEKTEKKKKES) show a composition bias toward basic and acidic residues.

This is an uncharacterized protein from Acidianus hospitalis (AFV-1).